The chain runs to 351 residues: uncharacterized protein (351 aa).

Mn(2+) contacts are provided by aspartate 215, aspartate 226, histidine 290, glutamate 319, and glutamate 333.

This sequence belongs to the peptidase M24B family. The cofactor is Mn(2+).

This is an uncharacterized protein from Staphylococcus haemolyticus (strain JCSC1435).